The following is a 686-amino-acid chain: MLLEGVLLVVQALQLASALDLPAGSCAFEEDTCGFDSVFAFLPWILNEEGHYVYMDTSFARQGEKAVLLSSDLQAEEWNCLRLVYQITTPPGSVSDPSQLNLYVRFEDESFDRLLWSTKEPSDSWLIASLDLQNTSKKFKILIEGVLGQGNTASIALFEIKMTAGYCIECDFEENHLCGFVNRWNPNVNWFVGGGTAKNTHSVLPQDHTFRSEHGHYMYVDSVYVKHFQEVAQLISPVTTASMSGCLSFYYQLQQGNDNVFSVYTRDMAGLYEEIWKVDSPGNAAWNLAEVEFSAPYPMEVIFEVAFNGPKGGYVALDDISFSPVHCQNQTGLPFSAVETSCDFEIGLCNFYQDKEGPGWTRVRVKANMYRAGDHTTGTGHYLLANTKFTSQPGYIGRLYGPSLPGNMQYCVRFHYAIFGFLKMSDTLAVYIFEENHVVQEKIWSVLESPRGVWMQAEISFKKPMPTKVVFMSLCKSFWDCGLVALDDITIQLGNCRSPARLPPPPGECTFDQDECAFTQEKRNRSSWHRGRGETPTSYTGPKGDHTTGVGYYMYIEASHMVYGQKAHLLSQPLRGVPGKHCLTFFYHMYGAGTGLLSVYLKREEDSEESLLWRRRGEQSISWLRALVEYSCRRRHQIIFEATRGVSIRSDIAIDDVKLQAGPCAGMEDTTEQSSGYSEDLNEIEY.

The first 18 residues, 1–18 (MLLEGVLLVVQALQLASA), serve as a signal peptide directing secretion. 4 MAM domains span residues 24-169 (GSCA…YCIE), 168-329 (IECD…HCQN), 340-498 (TSCD…NCRS), and 507-666 (GECT…PCAG). N-linked (GlcNAc...) asparagine glycans are attached at residues asparagine 134 and asparagine 329. An N-linked (GlcNAc...) asparagine glycan is attached at asparagine 524. The tract at residues 665–686 (AGMEDTTEQSSGYSEDLNEIEY) is disordered.

Post-translationally, O-glycosylated; contains chondroitin sulfate.

It is found in the secreted. Its subcellular location is the extracellular space. The protein localises to the extracellular matrix. This chain is MAM domain-containing protein 2 (Mamdc2), found in Mus musculus (Mouse).